Here is a 391-residue protein sequence, read N- to C-terminus: Succinyl-diaminopimelate desuccinylase (391 aa).

Histidine 67 lines the Zn(2+) pocket. Aspartate 69 is a catalytic residue. Aspartate 101 lines the Zn(2+) pocket. Catalysis depends on glutamate 135, which acts as the Proton acceptor. Residues glutamate 136, glutamate 164, and histidine 353 each coordinate Zn(2+).

The protein belongs to the peptidase M20A family. DapE subfamily. As to quaternary structure, homodimer. The cofactor is Zn(2+). Requires Co(2+) as cofactor.

The catalysed reaction is N-succinyl-(2S,6S)-2,6-diaminopimelate + H2O = (2S,6S)-2,6-diaminopimelate + succinate. It participates in amino-acid biosynthesis; L-lysine biosynthesis via DAP pathway; LL-2,6-diaminopimelate from (S)-tetrahydrodipicolinate (succinylase route): step 3/3. Its function is as follows. Catalyzes the hydrolysis of N-succinyl-L,L-diaminopimelic acid (SDAP), forming succinate and LL-2,6-diaminopimelate (DAP), an intermediate involved in the bacterial biosynthesis of lysine and meso-diaminopimelic acid, an essential component of bacterial cell walls. The chain is Succinyl-diaminopimelate desuccinylase from Rickettsia bellii (strain RML369-C).